The sequence spans 292 residues: Phosphoenolpyruvate guanylyltransferase (292 aa).

Residues T168, G184, and S187 each coordinate phosphoenolpyruvate. Positions 243 to 292 (PLVAEDSGGSGGESGTSAESGLSVPPGIVGGTQRRIVSDASGPGRAKKYP) are disordered.

Belongs to the CofC family.

The catalysed reaction is phosphoenolpyruvate + GTP + H(+) = enolpyruvoyl-2-diphospho-5'-guanosine + diphosphate. The protein operates within cofactor biosynthesis; coenzyme F420 biosynthesis. In terms of biological role, guanylyltransferase that catalyzes the activation of phosphoenolpyruvate (PEP) as enolpyruvoyl-2-diphospho-5'-guanosine, via the condensation of PEP with GTP. It is involved in the biosynthesis of coenzyme F420, a hydride carrier cofactor. The sequence is that of Phosphoenolpyruvate guanylyltransferase from Frankia casuarinae (strain DSM 45818 / CECT 9043 / HFP020203 / CcI3).